A 231-amino-acid chain; its full sequence is uncharacterized protein (231 aa).

5 helical membrane-spanning segments follow: residues 36–56, 58–78, 83–103, 143–163, and 170–190; these read SLLA…SFFI, SQVT…ALQW, APLN…TLTP, FTVM…ASLL, and SIVN…YILY.

This sequence belongs to the BI1 family.

It localises to the cell membrane. This is an uncharacterized protein from Campylobacter jejuni subsp. jejuni serotype O:2 (strain ATCC 700819 / NCTC 11168).